The primary structure comprises 389 residues: DNA replication and repair protein RecF (389 aa).

30–37 (GPNGFGKT) is an ATP binding site.

It belongs to the RecF family.

Its subcellular location is the cytoplasm. Its function is as follows. The RecF protein is involved in DNA metabolism; it is required for DNA replication and normal SOS inducibility. RecF binds preferentially to single-stranded, linear DNA. It also seems to bind ATP. In Mycolicibacterium gilvum (strain PYR-GCK) (Mycobacterium gilvum (strain PYR-GCK)), this protein is DNA replication and repair protein RecF.